The sequence spans 281 residues: Polyamine aminopropyltransferase (281 aa).

A PABS domain is found at 2–237 (EIWYTEKLEL…GIIGFTFLSN (236 aa)). Gln33 is a binding site for S-methyl-5'-thioadenosine. Residues His64 and Asp88 each coordinate spermidine. S-methyl-5'-thioadenosine is bound by residues Glu108 and 139–140 (DG). Asp157 functions as the Proton acceptor in the catalytic mechanism. Spermidine is bound at residue 157 to 160 (DSSD). An S-methyl-5'-thioadenosine-binding site is contributed by Pro164.

It belongs to the spermidine/spermine synthase family. In terms of assembly, homodimer or homotetramer.

Its subcellular location is the cytoplasm. It carries out the reaction S-adenosyl 3-(methylsulfanyl)propylamine + putrescine = S-methyl-5'-thioadenosine + spermidine + H(+). It functions in the pathway amine and polyamine biosynthesis; spermidine biosynthesis; spermidine from putrescine: step 1/1. In terms of biological role, catalyzes the irreversible transfer of a propylamine group from the amino donor S-adenosylmethioninamine (decarboxy-AdoMet) to putrescine (1,4-diaminobutane) to yield spermidine. In Leptospira biflexa serovar Patoc (strain Patoc 1 / Ames), this protein is Polyamine aminopropyltransferase.